A 492-amino-acid polypeptide reads, in one-letter code: Nuclear hormone receptor family member nhr-4 (492 aa).

The nuclear receptor DNA-binding region spans 47–122 (RLICDVCGDV…VGMNPDSVQN (76 aa)). 2 NR C4-type zinc fingers span residues 50 to 70 (CDVC…CNGC) and 86 to 110 (CRFG…LKKC). The tract at residues 121-143 (QNERDRNAKNGGMGGPMSSPTQS) is disordered. An NR LBD domain is found at 215–481 (MDFSIHSAVL…ELIQATHKTT (267 aa)).

The protein belongs to the nuclear hormone receptor family.

It is found in the nucleus. Its function is as follows. Orphan nuclear receptor. The polypeptide is Nuclear hormone receptor family member nhr-4 (nhr-4) (Caenorhabditis elegans).